A 296-amino-acid chain; its full sequence is NAD kinase (296 aa).

The Proton acceptor role is filled by aspartate 73. Residues 73-74, lysine 78, 151-152, arginine 178, aspartate 180, and 191-196 contribute to the NAD(+) site; these read DG, NE, and TAHAMS.

Belongs to the NAD kinase family. It depends on a divalent metal cation as a cofactor.

It is found in the cytoplasm. It catalyses the reaction NAD(+) + ATP = ADP + NADP(+) + H(+). Involved in the regulation of the intracellular balance of NAD and NADP, and is a key enzyme in the biosynthesis of NADP. Catalyzes specifically the phosphorylation on 2'-hydroxyl of the adenosine moiety of NAD to yield NADP. In Francisella tularensis subsp. novicida (strain U112), this protein is NAD kinase.